Here is a 162-residue protein sequence, read N- to C-terminus: MFIDTSELCDLYAEQVDVVEPIFSSFGGVSNFYGKVTTVKCFESNGLIAEVLEENGEGRVLVIDGGGAVRRGLIDAELAQLAVDNGWEGIIVYGAVRQIQQLENLDIGIHALAPIPVSADESSAGESDIPVNFGGVTFFPEDYIYADLTGIILSQEPLDLED.

The protein belongs to the RraA family. Homotrimer. Binds to both RNA-binding sites in the C-terminal region of Rne and to RhlB.

Its subcellular location is the cytoplasm. Its function is as follows. Globally modulates RNA abundance by binding to RNase E (Rne) and regulating its endonucleolytic activity. Can modulate Rne action in a substrate-dependent manner by altering the composition of the degradosome. Modulates RNA-binding and helicase activities of the degradosome. The polypeptide is Regulator of ribonuclease activity A (Haemophilus influenzae (strain ATCC 51907 / DSM 11121 / KW20 / Rd)).